A 575-amino-acid polypeptide reads, in one-letter code: Arginine--tRNA ligase (575 aa).

Positions 130–140 match the 'HIGH' region motif; that stretch reads ANPTGPMHVGH.

Belongs to the class-I aminoacyl-tRNA synthetase family. Monomer.

It is found in the cytoplasm. The enzyme catalyses tRNA(Arg) + L-arginine + ATP = L-arginyl-tRNA(Arg) + AMP + diphosphate. The sequence is that of Arginine--tRNA ligase from Magnetococcus marinus (strain ATCC BAA-1437 / JCM 17883 / MC-1).